Here is a 149-residue protein sequence, read N- to C-terminus: Chromophore lyase CpcS/CpeS homolog (149 aa).

Belongs to the CpcS/CpeS biliprotein lyase family.

It is found in the plastid. It localises to the chloroplast. Might function to covalently attach a chromophore to Cys residue(s) of phycobiliproteins. This is Chromophore lyase CpcS/CpeS homolog from Pyropia yezoensis (Susabi-nori).